The sequence spans 82 residues: RNA-binding protein Hfq (82 aa).

A Sm domain is found at 10 to 70; that stretch reads DIFLNGARKN…LSTITPSKAI (61 aa).

This sequence belongs to the Hfq family. Homohexamer.

RNA chaperone that binds small regulatory RNA (sRNAs) and mRNAs to facilitate mRNA translational regulation in response to envelope stress, environmental stress and changes in metabolite concentrations. Also binds with high specificity to tRNAs. In Clostridium kluyveri (strain NBRC 12016), this protein is RNA-binding protein Hfq.